We begin with the raw amino-acid sequence, 222 residues long: Small ribosomal subunit protein eS1 (222 aa).

It belongs to the eukaryotic ribosomal protein eS1 family.

The protein is Small ribosomal subunit protein eS1 of Pyrobaculum neutrophilum (strain DSM 2338 / JCM 9278 / NBRC 100436 / V24Sta) (Thermoproteus neutrophilus).